Consider the following 48-residue polypeptide: uncharacterized protein (48 aa).

Residues 1–48 are disordered; the sequence is MSRRMGGGMPKINLSGAIPNNNTSTPSTPTLRSSVSVSSSNSRGLFLA. Low complexity predominate over residues 20–48; it reads NNNTSTPSTPTLRSSVSVSSSNSRGLFLA.

This is an uncharacterized protein from Dictyostelium discoideum (Social amoeba).